A 286-amino-acid chain; its full sequence is Translocon-associated protein subunit alpha (286 aa).

A signal peptide spans 1 to 21 (MRLLPRLLLLFLLAFPAAVLL). At 22–207 (RGGPGGSLAL…EREDGLDGET (186 aa)) the chain is on the lumenal side. Residues 46-75 (IIEDEDDEAEVEEDEPTDLAEDKEEEDVSS) are compositionally biased toward acidic residues. The tract at residues 46–83 (IIEDEDDEAEVEEDEPTDLAEDKEEEDVSSEPEASPSA) is disordered. 2 N-linked (GlcNAc...) asparagine glycosylation sites follow: Asn136 and Asn191. A helical transmembrane segment spans residues 208–228 (IFMYMFLAGLGLLVVVGLHQL). Residues 229-286 (LESRKRKRPIQKVEMGTSSQNDVDMSWIPQETLNQINKASPRRQPRKRAQKRSVGSDE) lie on the Cytoplasmic side of the membrane. Residues 236 to 286 (RPIQKVEMGTSSQNDVDMSWIPQETLNQINKASPRRQPRKRAQKRSVGSDE) form a disordered region. Polar residues predominate over residues 244-266 (GTSSQNDVDMSWIPQETLNQINK). Ser247 is subject to Phosphoserine. Thr260 is modified (phosphothreonine). A Phosphoserine modification is found at Ser268. A compositionally biased stretch (basic residues) spans 268–279 (SPRRQPRKRAQK).

Belongs to the TRAP-alpha family. Heterotetramer of TRAP-alpha, TRAP-beta, TRAP-delta and TRAP-gamma. Interacts with palmitoylated calnexin (CALX), the interaction is required for efficient folding of glycosylated proteins.

Its subcellular location is the endoplasmic reticulum membrane. Its function is as follows. TRAP proteins are part of a complex whose function is to bind calcium to the ER membrane and thereby regulate the retention of ER resident proteins. May be involved in the recycling of the translocation apparatus after completion of the translocation process or may function as a membrane-bound chaperone facilitating folding of translocated proteins. The protein is Translocon-associated protein subunit alpha (Ssr1) of Mus musculus (Mouse).